Here is a 461-residue protein sequence, read N- to C-terminus: Transforming growth factor beta-1-induced transcript 1 protein (461 aa).

The residue at position 1 (Met1) is an N-acetylmethionine. The tract at residues 1 to 86 (MEDLDALLSD…PPFSSSSGVL (86 aa)) is disordered. A transcription activation region spans residues 1 to 200 (MEDLDALLSD…GCPSPPGQTN (200 aa)). The interval 1 to 240 (MEDLDALLSD…CNKPIAGQVV (240 aa)) is interaction with PTK2B/PYK2. Positions 3–15 (DLDALLSDLETTT) match the LD motif 1 motif. Thr33 is modified (phosphothreonine). Tyr38 bears the Phosphotyrosine mark. The span at 41-52 (QPQTGSGESSGA) shows a compositional bias: polar residues. A Phosphotyrosine; by FAK2 and FYN modification is found at Tyr60. Residue Ser68 is modified to Phosphoserine. Residues 69–83 (PKSVAPVAPPFSSSS) are compositionally biased toward low complexity. Positions 83 to 136 (SGVLGNGLCELDRLLQELNATQFNITDEIMSQFPSSKMAEGEGKEDQSEDKSIT) are interaction with PTK2/FAK1. Positions 92–104 (ELDRLLQELNATQ) match the LD motif 2 motif. Positions 116–154 (PSSKMAEGEGKEDQSEDKSITTVPSSTFPAPSKPSATSA) are disordered. Residues 121-134 (AEGEGKEDQSEDKS) are compositionally biased toward basic and acidic residues. Residues 135–154 (ITTVPSSTFPAPSKPSATSA) show a composition bias toward polar residues. Residues Ser140, Ser141, Ser164, and Ser186 each carry the phosphoserine modification. Positions 157-168 (ELDRLMASLSDF) match the LD motif 3 motif. The disordered stretch occupies residues 171-204 (QNHLPASGPPQPPAVSPTREGCPSPPGQTNKGSL). Thr188 is modified (phosphothreonine). Ser194 is subject to Phosphoserine. Residues 203–215 (SLDTMLGLLQSDL) carry the LD motif 4 motif. 4 LIM zinc-binding domains span residues 226-285 (GLCG…RFSP), 286-343 (RCGF…QLFA), 344-403 (PRCQ…QRGS), and 404-461 (LCAT…KLFG). At Ser403 the chain carries Phosphoserine. Thr407 is modified (phosphothreonine).

This sequence belongs to the paxillin family. Homooligomer. Interacts with PPARG. Interacts with TRAF4. Interacts with CRIP2. Interacts with HSPB1. Interacts with ILK. Interacts with LIMS1 and LIMS2. Interacts with NCK2. Interacts with NUDT16L1. Interacts with PAK. Interacts with PTPN12. Interacts with TCF3. Interacts with TCF7L2. Interacts with VCL. Interacts (via LD motif 3) with GIT1. Also interacts with GIT2. Forms a complex with ARHGEF7. Interacts with AR/androgen receptor in a ligand-dependent manner. Interacts with CSK. Interacts with PTK2/FAK1 and PTK2B/PYK2. Interacts with SLC6A3 and SLC6A4. Interacts with NR3C1. Interacts with SMAD3. Interacts with MAPK15. Interacts with SRC. Interacts with LYN. Interacts with talin. Interacts (via LIM zinc-binding domain 2) with CBLC (via RING-type zinc finger); the interaction is direct and enhances CBLC E3 ubiquitin-protein ligase activity. Interacts with PARVA. Interacts with PXN. In terms of processing, phosphorylated by gonadotropin-releasing hormone-activated SRC. Strongly expressed in large intestine, lung, spleen, testis, uterus and to a lower extent in brain, kidney and liver (at protein level). In brain, expressed by neuronal and non neuronal cells (at protein level).

The protein localises to the cell junction. The protein resides in the focal adhesion. Its subcellular location is the nucleus matrix. It localises to the cytoplasm. It is found in the cytoskeleton. Functions as a molecular adapter coordinating multiple protein-protein interactions at the focal adhesion complex and in the nucleus. Links various intracellular signaling modules to plasma membrane receptors and regulates the Wnt and TGFB signaling pathways. May also regulate SLC6A3 and SLC6A4 targeting to the plasma membrane hence regulating their activity. In the nucleus, functions as a nuclear receptor coactivator regulating glucocorticoid, androgen, mineralocorticoid and progesterone receptor transcriptional activity. May play a role in the processes of cell growth, proliferation, migration, differentiation and senescence. May have a zinc-dependent DNA-binding activity. This chain is Transforming growth factor beta-1-induced transcript 1 protein (Tgfb1i1), found in Rattus norvegicus (Rat).